Consider the following 86-residue polypeptide: Large ribosomal subunit protein eL31 (86 aa).

The protein belongs to the eukaryotic ribosomal protein eL31 family.

This chain is Large ribosomal subunit protein eL31, found in Methanopyrus kandleri (strain AV19 / DSM 6324 / JCM 9639 / NBRC 100938).